A 537-amino-acid chain; its full sequence is Ceramide kinase (537 aa).

The interval M1 to W115 is essential for enzyme activity. Residues M1 to K125 are required for binding to sulfatide and phosphoinositides. Residues S128 to S278 enclose the DAGKc domain. Residues N138–F140 and T170–N174 contribute to the ATP site. G195–G198 contributes to the substrate binding site. The active-site Proton donor/acceptor is the D197. Residues E202, G239 to T241, R304, and R310 each bind ATP. Phosphoserine occurs at positions 340 and 408. Residue D502–E504 coordinates ATP.

It depends on Ca(2+) as a cofactor. The cofactor is Mg(2+). As to expression, high level expression in heart, brain, skeletal muscle, kidney and liver; moderate in peripheral blood leukocytes and thymus; very low in spleen, small intestine, placenta and lung.

The protein localises to the cytoplasm. It localises to the cell membrane. It carries out the reaction an N-acylsphing-4-enine + ATP = an N-acylsphing-4-enine 1-phosphate + ADP + H(+). It catalyses the reaction N-(hexanoyl)sphing-4-enine + ATP = N-hexanoylsphing-4-enine 1-phosphate + ADP + H(+). The enzyme catalyses N-(acetyl)-sphing-4-enine + ATP = N-(acetyl)-sphing-4-enine-1-phosphate + ADP + H(+). The catalysed reaction is N-hexadecanoylsphing-4-enine + ATP = N-(hexadecanoyl)-sphing-4-enine-1-phosphate + ADP + H(+). It carries out the reaction N-hexanoyl-(4R)-hydroxysphinganine + ATP = N-hexanoyl-(4R)-hydroxysphinganine-1-phosphate + ADP + H(+). With respect to regulation, inhibited by sulfatide. Inhibited by sphinganine, sphingenine, and N,N-Dimethylsphingosine (DMS). Cardiolipin at 0.1 uM significantly increases activity, whereas at concentrations &gt;1 uM has an inhibitory effect. Functionally, catalyzes specifically the phosphorylation of ceramide to form ceramide 1-phosphate. Acts efficiently on natural and analog ceramides (C6, C8, C16 ceramides, and C8-dihydroceramide), to a lesser extent on C2-ceramide and C6-dihydroceramide, but not on other lipids, such as various sphingosines. Shows a greater preference for D-erythro isomer of ceramides. Binds phosphoinositides. This is Ceramide kinase (CERK) from Homo sapiens (Human).